We begin with the raw amino-acid sequence, 1285 residues long: MKTKHFFNSDFTVKGKSADEIFRRLCTDHPDKQLNNVKWKEVFINRFGQMMLDTPNPRKIVEKIINEGLEKQGLKNIDPETTYFNIFSSSDSSDGNVFHYNSLSESYRVTDACLMNIFVERYFDDWDLLNSLASNGIYSVGKEGAYYPDHDYGPEYNPVWGPNEQIYHSRVIADILYARSVWDEFKKYFMEYWQKYAQLYTEMLSDTFLAMAIQQYTRQTLTDEGFLMVCNTYYGNKEEVQITLLDIYGYPSTDIICIEQKGLPTPKVILYIPGGTQPFVEFLNTDDLKQWIAWHLKDNKHMVAFRKHFSLKQRQEGETFTGIDKALQYIAEESPEWPANKYILYNPTHLETENLFNIMMKRTEQRMLEDSDVQIRSNSEATRDYALSLLETFISQLSAIDMLVPAVGIPINFALSATALGLSSDIVVNGDSYEKRKYGIGSLVQSALFTGINLIPVISETAEILSSFSRTEEDIPAFFTEEQALAQRFEIVEEELHSISPDDPPREITDENLHKIRLVRLNNENQPLVVLRRLGGNKFIRIEPITFQEIKGSLVSEVINPVTNKTYYVSNAKLLGGSPYSPFRIGLEGVWTPEVLKARASVIGKPIGESYKRILAKLQRIHNSNILDERQGLMHELMELIDLYEESQPSSERLNAFRELRTQLEKALYLPEMEALKKQILQIPNKGSGAARFLLRTAMNEMAGKTSESTADLIRFALQDTVISAPFRGYAGAIPEAIDFPVKYVIEDISVFDKIQTNYWELPAYESWNEGSNSALLPGLLRESQSKGMLSKCRIIENSLYIGHSYEEMFYSISPYSNQVGGPYELYPFTFFSMLQEVQGDLGFEQAFATRNFFNTLVSDRLSLMENTMLLTESFDYTPWDAIYGDINYDEQFAAMSINERIEKCMNTYRGVAFQNSSKSIDFFLNNLTTFIDNGLTEIAISDLPYDIVQQEISQFLQGSNEWKTLDAMLFNLDKGDINGAFRKLLQSAKDNNIKFRAIGHSDNSVPPFNNPYKSLYYKGNIIAEAIEKLDREGQKFVVFADSSLLNSTPGTGRPMPGLVQYLKIPATVVDSDGAWQFLPDVASSRVPIEVTELENWQVLTPPQGKILGLKQFKLTAGFPTEQSRLPLLENSVSEDLREELMQKIDAIKNDVKMNSLVCMEAGSCDSVSPKVAARLKDMGLEAGMGASITWWRREGGMEFSHQMHTTASFKFAGKEFAVDASHLQFVHDQLDTTILILPVDDWALEIAQRNRAINPFVEYVSKTGNMLALFMPPLFTKPRLTRAL.

A helical membrane pass occupies residues 402 to 422 (MLVPAVGIPINFALSATALGL).

It localises to the cytoplasm. The protein resides in the secreted. It is found in the host membrane. This is a dermonecrotic toxin. This osteolytic toxin, induces bone resorption. Potent mitogen. This toxin is associated with the severe progressive form of the atrophic rhinitis, a major respiratory disease in pigs. The polypeptide is Dermonecrotic toxin (toxA) (Pasteurella multocida).